The primary structure comprises 160 residues: tRNA (cytidine(56)-2'-O)-methyltransferase (160 aa).

S-adenosyl-L-methionine-binding positions include Leu-68, 94–98 (GAEKV), and 112–119 (IGNQPHSE).

It belongs to the aTrm56 family. As to quaternary structure, homodimer.

Its subcellular location is the cytoplasm. It catalyses the reaction cytidine(56) in tRNA + S-adenosyl-L-methionine = 2'-O-methylcytidine(56) in tRNA + S-adenosyl-L-homocysteine + H(+). In terms of biological role, specifically catalyzes the AdoMet-dependent 2'-O-ribose methylation of cytidine at position 56 in tRNAs. The sequence is that of tRNA (cytidine(56)-2'-O)-methyltransferase from Saccharolobus solfataricus (strain ATCC 35092 / DSM 1617 / JCM 11322 / P2) (Sulfolobus solfataricus).